The sequence spans 199 residues: MASDFWLIAGLGNPGSKYEGTRHNMGFMTADVLAERWSVNFSDHKGLAMLGKGVMNLSGRNVKFFLAKPLTYMNESGNAVASISAYYQIEPDHIVVIHDDMDLDFGRIKVKAGGSAGGHNGIKSIDRSLGTPKYARVRMGVGHAQRGAHAHDNTVNWVLGGFGPDQRKQLPEFLADGADAAETIIFDGLAKAQERFNGR.

Position 18 (tyrosine 18) interacts with tRNA. Catalysis depends on histidine 23, which acts as the Proton acceptor. TRNA contacts are provided by tyrosine 72, asparagine 74, and asparagine 120.

Belongs to the PTH family. Monomer.

It is found in the cytoplasm. It catalyses the reaction an N-acyl-L-alpha-aminoacyl-tRNA + H2O = an N-acyl-L-amino acid + a tRNA + H(+). Functionally, hydrolyzes ribosome-free peptidyl-tRNAs (with 1 or more amino acids incorporated), which drop off the ribosome during protein synthesis, or as a result of ribosome stalling. Its function is as follows. Catalyzes the release of premature peptidyl moieties from peptidyl-tRNA molecules trapped in stalled 50S ribosomal subunits, and thus maintains levels of free tRNAs and 50S ribosomes. The sequence is that of Peptidyl-tRNA hydrolase from Bifidobacterium adolescentis (strain ATCC 15703 / DSM 20083 / NCTC 11814 / E194a).